We begin with the raw amino-acid sequence, 542 residues long: MFS-type efflux pump MMF1 (542 aa).

A run of 8 helical transmembrane segments spans residues 24–44 (WTIFAALMLIAFLAALDMTMI), 51–71 (IVAALPPSSIAANWITSAFLL), 98–118 (VIFLVGSIVCATAKSVLVLVV), 124–144 (GLGGGGIHALSEIIMSDLTTL), 151–171 (FGLIALVFAVAGFIAPVLGGV), 179–199 (WIFWINLPIGAVALVLLVLFL), 215–235 (LDLVGNAILFGSVTAVLIAVT), and 248–268 (VWVPLVVGLIGLVAFLMVEWI). Residue N285 is glycosylated (N-linked (GlcNAc...) asparagine). The next 6 helical transmembrane spans lie at 296-316 (FLHGVIFYGIIYMVPIYFQAI), 326-346 (IWSFPLTAPSTPLALIAGLLI), 355-375 (LIFIGWALMAGGVGWLTHWSV), 384-404 (ISQIIAGAGIGIMFPITLPPI), 419-439 (AYAFSRTFGAVWGITGATTIF), and 490-510 (ISDSFWLFVPLAIIGFASTFL).

The protein belongs to the major facilitator superfamily.

Its subcellular location is the cell membrane. Functionally, glycosyltransferase; part of the gene cluster that mediates the biosynthesis of mannosylerythritol lipids (MELs), surface-active substances that enhance the availability of water-insoluble substrates. MMF1 is directly involved in the secretiopn of MALs. This is MFS-type efflux pump MMF1 from Pseudozyma antarctica (strain T-34) (Yeast).